The primary structure comprises 294 residues: Ribosomal RNA small subunit methyltransferase A (294 aa).

S-adenosyl-L-methionine-binding residues include asparagine 33, leucine 35, glycine 60, glutamate 81, aspartate 106, and asparagine 131.

It belongs to the class I-like SAM-binding methyltransferase superfamily. rRNA adenine N(6)-methyltransferase family. RsmA subfamily.

The protein localises to the cytoplasm. It catalyses the reaction adenosine(1518)/adenosine(1519) in 16S rRNA + 4 S-adenosyl-L-methionine = N(6)-dimethyladenosine(1518)/N(6)-dimethyladenosine(1519) in 16S rRNA + 4 S-adenosyl-L-homocysteine + 4 H(+). Specifically dimethylates two adjacent adenosines (A1518 and A1519) in the loop of a conserved hairpin near the 3'-end of 16S rRNA in the 30S particle. May play a critical role in biogenesis of 30S subunits. The protein is Ribosomal RNA small subunit methyltransferase A of Lactococcus lactis subsp. lactis (strain IL1403) (Streptococcus lactis).